The following is a 628-amino-acid chain: Patulin synthase (628 aa).

A signal peptide spans 1–20 (MRPIPSILGALGAFATLSAA). A glycan (N-linked (GlcNAc...) asparagine) is linked at Asn-48. FAD is bound by residues 60–61 (TA) and 81–82 (EA). Asn-92 carries N-linked (GlcNAc...) asparagine glycosylation. Residue 147-150 (NYMA) participates in FAD binding. N-linked (GlcNAc...) asparagine glycosylation is found at Asn-197, Asn-260, Asn-386, Asn-429, and Asn-486. Residue His-564 is the Proton acceptor of the active site. FAD contacts are provided by residues Ala-598 and 609–610 (PQ).

This sequence belongs to the GMC oxidoreductase family. Homodimer. Requires FAD as cofactor.

Its subcellular location is the cytoplasm. It localises to the cell cortex. It is found in the vacuole. The protein localises to the secreted. The protein resides in the cell wall. The catalysed reaction is (E)-ascladiol + A = patulin + AH2. It functions in the pathway mycotoxin biosynthesis; patulin biosynthesis. Its function is as follows. Patulin synthase; part of the gene cluster that mediates the biosynthesis of patulin, an acetate-derived tetraketide mycotoxin produced by several fungal species that shows antimicrobial properties against several bacteria. PatE catalyzes the last step of the pathway which is the conversion of E-ascladiol to patulin. The pathway begins with the synthesis of 6-methylsalicylic acid by the polyketide synthase (PKS) patK via condensation of acetate and malonate units. The 6-methylsalicylic acid decarboxylase patG then catalyzes the decarboxylation of 6-methylsalicylic acid to yield m-cresol (also known as 3-methylphenol). These first reactions occur in the cytosol. The intermediate m-cresol is then transported into the endoplasmic reticulum where the cytochrome P450 monooxygenase patH converts it to m-hydroxybenzyl alcohol, which is further converted to gentisyl alcohol by the cytochrome P450 monooxygenase patI. The oxidoreductases patJ and patO further convert gentisyl alcohol to isoepoxydon in the vacuole. PatN catalyzes then the transformation of isoepoxydon into phyllostine. The cluster protein patF is responsible for the conversion from phyllostine to neopatulin whereas the alcohol dehydrogenase patD converts neopatulin to E-ascladiol. The steps between isoepoxydon and E-ascladiol occur in the cytosol, and E-ascladiol is probably secreted to the extracellular space by one of the cluster-specific transporters patC or patM. Finally, the secreted patulin synthase patE catalyzes the conversion of E-ascladiol to patulin. This chain is Patulin synthase, found in Aspergillus clavatus (strain ATCC 1007 / CBS 513.65 / DSM 816 / NCTC 3887 / NRRL 1 / QM 1276 / 107).